A 256-amino-acid polypeptide reads, in one-letter code: Inner membrane transport permease YadH (256 aa).

At 1–22 the chain is on the periplasmic side; the sequence is MMHLYWVALKSIWAKEIHRFMR. The ABC transmembrane type-2 domain maps to 22-251; sequence RIWVQTLVPP…LICWSLIQRG (230 aa). The chain crosses the membrane as a helical span at residues 23–43; that stretch reads IWVQTLVPPVITMTLYFIIFG. Over 44–52 the chain is Cytoplasmic; the sequence is NLIGSRIGD. Residues 53-73 traverse the membrane as a helical segment; the sequence is MHGFSYMQFIVPGLIMMSVIT. At 74-94 the chain is on the periplasmic side; the sequence is NAYANVASSFFGAKFQRNIEE. A helical membrane pass occupies residues 95 to 115; sequence LLVAPVPTHVIIAGYVGGGVA. Position 116 (arginine 116) is a topological domain, cytoplasmic. Residues 117 to 137 form a helical membrane-spanning segment; it reads GLFVGILVTAISLFFVPFQVH. Serine 138 is a topological domain (periplasmic). The chain crosses the membrane as a helical span at residues 139 to 159; the sequence is WVFVALTLVLTAVLFSLAGLL. Residues 160–169 lie on the Cytoplasmic side of the membrane; that stretch reads NGVFAKTFDD. The chain crosses the membrane as a helical span at residues 170 to 190; that stretch reads ISLVPTFVLTPLTYLGGVFYS. At 191 to 223 the chain is on the periplasmic side; sequence LTLLPPFWQGLSHLNPIVYMISGFRYGFLGIND. Residues 224 to 244 traverse the membrane as a helical segment; the sequence is VPLVTTFGVLVVFIVAFYLIC. Residues 245-256 are Cytoplasmic-facing; it reads WSLIQRGRGLRS.

This sequence belongs to the ABC-2 integral membrane protein family.

Its subcellular location is the cell inner membrane. In Escherichia coli O157:H7, this protein is Inner membrane transport permease YadH (yadH).